The primary structure comprises 292 residues: 2-(5''-triphosphoribosyl)-3'-dephosphocoenzyme-A synthase (292 aa).

The protein belongs to the CitG/MdcB family.

The enzyme catalyses 3'-dephospho-CoA + ATP = 2'-(5''-triphospho-alpha-D-ribosyl)-3'-dephospho-CoA + adenine. Catalyzes the formation of 2-(5''-triphosphoribosyl)-3'-dephosphocoenzyme-A, the precursor of the prosthetic group of the holo-acyl carrier protein (gamma chain) of citrate lyase, from ATP and dephospho-CoA. This chain is 2-(5''-triphosphoribosyl)-3'-dephosphocoenzyme-A synthase, found in Escherichia coli (strain SMS-3-5 / SECEC).